A 445-amino-acid polypeptide reads, in one-letter code: uncharacterized protein (445 aa).

Residues 139–160 are disordered; it reads TESQKDLEYERKANKTKEENQQ.

This is an uncharacterized protein from Mycoplasma pneumoniae (strain ATCC 29342 / M129 / Subtype 1) (Mycoplasmoides pneumoniae).